Consider the following 253-residue polypeptide: uncharacterized protein (253 aa).

6-30 is a binding site for NADP(+); sequence IITASDSGIGKECALLLAQQGFDIG. Position 140 (serine 140) interacts with substrate. Catalysis depends on tyrosine 153, which acts as the Proton acceptor.

This sequence belongs to the short-chain dehydrogenases/reductases (SDR) family.

This is an uncharacterized protein from Escherichia coli (strain K12).